A 202-amino-acid polypeptide reads, in one-letter code: ATP synthase subunit b (202 aa).

A helical membrane pass occupies residues 9–29; it reads TTLSLCLAVCVVVIAVGTGWA.

It belongs to the ATPase B chain family. F-type ATPases have 2 components, F(1) - the catalytic core - and F(0) - the membrane proton channel. F(1) has five subunits: alpha(3), beta(3), gamma(1), delta(1), epsilon(1). F(0) has three main subunits: a(1), b(2) and c(10-14). The alpha and beta chains form an alternating ring which encloses part of the gamma chain. F(1) is attached to F(0) by a central stalk formed by the gamma and epsilon chains, while a peripheral stalk is formed by the delta and b chains.

The protein resides in the cell inner membrane. Functionally, f(1)F(0) ATP synthase produces ATP from ADP in the presence of a proton or sodium gradient. F-type ATPases consist of two structural domains, F(1) containing the extramembraneous catalytic core and F(0) containing the membrane proton channel, linked together by a central stalk and a peripheral stalk. During catalysis, ATP synthesis in the catalytic domain of F(1) is coupled via a rotary mechanism of the central stalk subunits to proton translocation. In terms of biological role, component of the F(0) channel, it forms part of the peripheral stalk, linking F(1) to F(0). The protein is ATP synthase subunit b of Pelobacter propionicus (strain DSM 2379 / NBRC 103807 / OttBd1).